We begin with the raw amino-acid sequence, 238 residues long: IkB-like protein (238 aa).

ANK repeat units lie at residues 47-76 (NGSS…YPGE), 86-119 (DGNS…RICL), 123-152 (NGIT…DPTQ), and 157-186 (RGFT…KPLY). The Nuclear localization signal signature appears at 80–86 (PHRRDKD). The Nuclear localization signal signature appears at 202 to 213 (KKKPKIIITGCK). The PxIxITxC motif; Interaction with host PPP3CA signature appears at 205–212 (PKIIITGC). An FLCV motif motif is present at residues 227–230 (FLCV).

Belongs to the asfivirus A238L family. In terms of assembly, interacts with host PPIA. Interacts with host PPP3CA/Calcineurin. Interacts with host RELA/p65; interaction of the 32 kDa form with host RELA results in the formation of a stable complex with NF-kappa-B. Interacts with host PPP3R1. Interacts with host EP300; this interaction inhibits the association of host EP300 with host RELA, JUN and NFATC2. In terms of processing, the protein exists in a 28 kDa and a 32 kDa form, probably due to post-translational modifications which are neither phosphorylation, nor sumoylation.

The protein localises to the host nucleus. Its subcellular location is the host cytoplasm. In terms of biological role, ikB-like protein that inhibits the binding of NF-kappa-B to DNA, thereby downregulating pro-inflammatory cytokine production. Forms a heterodimer with the NF-kappa-B subunit RELA/p65 and prevents the activation of the NF-kappa-B transcription factor. Inhibits calcineurin function, which is required for the induction of nuclear factor of activated T cells (NFAT)-dependent immune response genes. Prevents the binding of substrates to calcineurin without affecting the phosphatase activity. Does not contain the serine residues that are phosphorylated by host IkB kinase and thus is not degraded following stimulation of the NFkB pathway. This is IkB-like protein (A238L) from African swine fever virus (isolate Warthog/Namibia/Wart80/1980) (ASFV).